The chain runs to 361 residues: Phospho-N-acetylmuramoyl-pentapeptide-transferase (361 aa).

10 helical membrane passes run 26 to 46 (SILA…VLIQ), 73 to 93 (TMGG…WGDL), 98 to 118 (VWLV…DDWI), 139 to 159 (IFGL…AAVT), 168 to 188 (IALP…IVGF), 200 to 220 (GLAI…AYAS), 237 to 257 (AGDL…FLWF), 264 to 284 (VFMG…IAVI), 289 to 309 (LVLV…IIQV), and 339 to 359 (VIVR…ATLK).

The protein belongs to the glycosyltransferase 4 family. MraY subfamily. Mg(2+) is required as a cofactor.

It is found in the cell inner membrane. It catalyses the reaction UDP-N-acetyl-alpha-D-muramoyl-L-alanyl-gamma-D-glutamyl-meso-2,6-diaminopimeloyl-D-alanyl-D-alanine + di-trans,octa-cis-undecaprenyl phosphate = di-trans,octa-cis-undecaprenyl diphospho-N-acetyl-alpha-D-muramoyl-L-alanyl-D-glutamyl-meso-2,6-diaminopimeloyl-D-alanyl-D-alanine + UMP. It participates in cell wall biogenesis; peptidoglycan biosynthesis. In terms of biological role, catalyzes the initial step of the lipid cycle reactions in the biosynthesis of the cell wall peptidoglycan: transfers peptidoglycan precursor phospho-MurNAc-pentapeptide from UDP-MurNAc-pentapeptide onto the lipid carrier undecaprenyl phosphate, yielding undecaprenyl-pyrophosphoryl-MurNAc-pentapeptide, known as lipid I. The sequence is that of Phospho-N-acetylmuramoyl-pentapeptide-transferase from Xylella fastidiosa (strain 9a5c).